The chain runs to 472 residues: Proline--tRNA ligase (472 aa).

It belongs to the class-II aminoacyl-tRNA synthetase family. ProS type 3 subfamily. In terms of assembly, homodimer.

Its subcellular location is the cytoplasm. The catalysed reaction is tRNA(Pro) + L-proline + ATP = L-prolyl-tRNA(Pro) + AMP + diphosphate. In terms of biological role, catalyzes the attachment of proline to tRNA(Pro) in a two-step reaction: proline is first activated by ATP to form Pro-AMP and then transferred to the acceptor end of tRNA(Pro). The polypeptide is Proline--tRNA ligase (Ureaplasma parvum serovar 3 (strain ATCC 27815 / 27 / NCTC 11736)).